The primary structure comprises 154 residues: MIINNLQEFYRLLLPNAPLISIDYGSKKIGIAISNQERNIAMPLNIITEASKKAIIASLLEKIEQYKACGIVIGLPIDMSGMQTEQSAIVIKFAEELTKSINLPIYLQDERLTTKAANNFLKSFGIKRKERNNNDDAVAASMILETVLNSINKL.

This sequence belongs to the YqgF nuclease family.

Its subcellular location is the cytoplasm. In terms of biological role, could be a nuclease involved in processing of the 5'-end of pre-16S rRNA. This Rickettsia bellii (strain OSU 85-389) protein is Putative pre-16S rRNA nuclease.